The sequence spans 908 residues: Protein translocase subunit SecA (908 aa).

ATP-binding positions include glutamine 87, 105–109 (GEGKT), and aspartate 507. Residues 860–898 (EALGNAEESDEASDQSVKTFERAGAKVGRNDPCPCGSGK) form a disordered region. Residues cysteine 892, cysteine 894, cysteine 903, and histidine 904 each contribute to the Zn(2+) site.

It belongs to the SecA family. Monomer and homodimer. Part of the essential Sec protein translocation apparatus which comprises SecA, SecYEG and auxiliary proteins SecDF-YajC and YidC. Requires Zn(2+) as cofactor.

Its subcellular location is the cell inner membrane. It is found in the cytoplasm. It carries out the reaction ATP + H2O + cellular proteinSide 1 = ADP + phosphate + cellular proteinSide 2.. In terms of biological role, part of the Sec protein translocase complex. Interacts with the SecYEG preprotein conducting channel. Has a central role in coupling the hydrolysis of ATP to the transfer of proteins into and across the cell membrane, serving both as a receptor for the preprotein-SecB complex and as an ATP-driven molecular motor driving the stepwise translocation of polypeptide chains across the membrane. The sequence is that of Protein translocase subunit SecA from Methylobacillus flagellatus (strain ATCC 51484 / DSM 6875 / VKM B-1610 / KT).